Here is a 544-residue protein sequence, read N- to C-terminus: Membrane protein insertase YidC (544 aa).

Residues 29–58 (TPKADPSATTQTLNPTSSESEDYVPTSSDS) are disordered. Residues 35–46 (SATTQTLNPTSS) are compositionally biased toward polar residues. The next 3 membrane-spanning stretches (helical) occupy residues 341–361 (FVLL…IIAI), 421–441 (GGCF…YVFL), and 499–519 (PVIF…YWLV).

It belongs to the OXA1/ALB3/YidC family. Type 1 subfamily. As to quaternary structure, interacts with the Sec translocase complex via SecD. Specifically interacts with transmembrane segments of nascent integral membrane proteins during membrane integration.

Its subcellular location is the cell inner membrane. Required for the insertion and/or proper folding and/or complex formation of integral membrane proteins into the membrane. Involved in integration of membrane proteins that insert both dependently and independently of the Sec translocase complex, as well as at least some lipoproteins. Aids folding of multispanning membrane proteins. The polypeptide is Membrane protein insertase YidC (Pseudoalteromonas translucida (strain TAC 125)).